The primary structure comprises 570 residues: Proline--tRNA ligase (570 aa).

Belongs to the class-II aminoacyl-tRNA synthetase family. ProS type 1 subfamily. In terms of assembly, homodimer.

Its subcellular location is the cytoplasm. It carries out the reaction tRNA(Pro) + L-proline + ATP = L-prolyl-tRNA(Pro) + AMP + diphosphate. Functionally, catalyzes the attachment of proline to tRNA(Pro) in a two-step reaction: proline is first activated by ATP to form Pro-AMP and then transferred to the acceptor end of tRNA(Pro). As ProRS can inadvertently accommodate and process non-cognate amino acids such as alanine and cysteine, to avoid such errors it has two additional distinct editing activities against alanine. One activity is designated as 'pretransfer' editing and involves the tRNA(Pro)-independent hydrolysis of activated Ala-AMP. The other activity is designated 'posttransfer' editing and involves deacylation of mischarged Ala-tRNA(Pro). The misacylated Cys-tRNA(Pro) is not edited by ProRS. The chain is Proline--tRNA ligase from Clostridium beijerinckii (strain ATCC 51743 / NCIMB 8052) (Clostridium acetobutylicum).